The following is a 343-amino-acid chain: Methionine import ATP-binding protein MetN (343 aa).

The ABC transporter domain occupies I2 to I241. G38–S45 is a binding site for ATP.

The protein belongs to the ABC transporter superfamily. Methionine importer (TC 3.A.1.24) family. The complex is composed of two ATP-binding proteins (MetN), two transmembrane proteins (MetI) and a solute-binding protein (MetQ).

It localises to the cell inner membrane. It catalyses the reaction L-methionine(out) + ATP + H2O = L-methionine(in) + ADP + phosphate + H(+). It carries out the reaction D-methionine(out) + ATP + H2O = D-methionine(in) + ADP + phosphate + H(+). Functionally, part of the ABC transporter complex MetNIQ involved in methionine import. Responsible for energy coupling to the transport system. In Sodalis glossinidius (strain morsitans), this protein is Methionine import ATP-binding protein MetN.